A 160-amino-acid polypeptide reads, in one-letter code: Phosphopantetheine adenylyltransferase (160 aa).

Belongs to the eukaryotic CoaD family.

Its subcellular location is the cytoplasm. The enzyme catalyses (R)-4'-phosphopantetheine + ATP + H(+) = 3'-dephospho-CoA + diphosphate. It participates in cofactor biosynthesis; coenzyme A biosynthesis. In terms of biological role, reversibly transfers an adenylyl group from ATP to 4'-phosphopantetheine, yielding dephospho-CoA (dPCoA) and pyrophosphate. This Pyrococcus furiosus (strain ATCC 43587 / DSM 3638 / JCM 8422 / Vc1) protein is Phosphopantetheine adenylyltransferase.